We begin with the raw amino-acid sequence, 420 residues long: Nucleoporin NUP42 (420 aa).

The segment at 1-25 adopts a C3H1-type zinc-finger fold; the sequence is MTICQFFLQGRCRFGDRCWNEHPGA. One copy of the FG 1 repeat lies at 14 to 15; that stretch reads FG. Residues 25-111 are disordered; sequence ARGAGGARQP…FASPLSDEQK (87 aa). Over residues 42–67 the composition is skewed to polar residues; sequence SGNNRRGWNASSQRYSNVIQPSSFPK. FG repeat units lie at residues 82–83, 95–96, 218–219, 220–221, 228–229, 265–266, 271–272, 288–289, 345–346, and 364–365; these read FG. The span at 87 to 102 shows a compositional bias: polar residues; the sequence is SGASTSRGFGSSQNPF. Residues 323–345 form a disordered region; it reads MAASPSGSTTAPPLRSGSSVVGF. Residues 365–420 form an interaction with GLE1 region; sequence GGSGISTSVLASGAADNALFTPRDQLMKEELEQFQSQRFTLGKIPLKPPPVELLTV.

As to quaternary structure, probable component of the nuclear pore complex (NPC). Interacts with nuclear export protein NXF1. Interacts with GLE1. Able to form a heterotrimer with NUP155 and GLE1 in vitro. Interacts with XPO1. O-glycosylated.

Its subcellular location is the nucleus. It localises to the nuclear pore complex. The protein resides in the nucleus membrane. In terms of biological role, required for the export of mRNAs containing poly(A) tails from the nucleus into the cytoplasm. In Mus musculus (Mouse), this protein is Nucleoporin NUP42 (Nup42).